The following is a 346-amino-acid chain: Methylthioribose-1-phosphate isomerase (346 aa).

Residues 54–56, R91, and Q192 each bind substrate; that span reads RGA. D233 serves as the catalytic Proton donor. 243–244 serves as a coordination point for substrate; the sequence is NK.

It belongs to the eIF-2B alpha/beta/delta subunits family. MtnA subfamily.

The enzyme catalyses 5-(methylsulfanyl)-alpha-D-ribose 1-phosphate = 5-(methylsulfanyl)-D-ribulose 1-phosphate. Its pathway is amino-acid biosynthesis; L-methionine biosynthesis via salvage pathway; L-methionine from S-methyl-5-thio-alpha-D-ribose 1-phosphate: step 1/6. Its function is as follows. Catalyzes the interconversion of methylthioribose-1-phosphate (MTR-1-P) into methylthioribulose-1-phosphate (MTRu-1-P). This chain is Methylthioribose-1-phosphate isomerase, found in Yersinia enterocolitica serotype O:8 / biotype 1B (strain NCTC 13174 / 8081).